Reading from the N-terminus, the 272-residue chain is Methylsterol monooxygenase 2-1 (272 aa).

Transmembrane regions (helical) follow at residues 24–44, 72–94, and 107–127; these read IGSF…YIFL, LLLY…FRFM, and VVSA…YWGH. One can recognise a Fatty acid hydroxylase domain in the interval 113–259; sequence LFYFIIEDFV…FVYMDWIFGT (147 aa). The Histidine box-1 signature appears at 127–131; the sequence is HRILH. The short motif at 140–144 is the Histidine box-2 element; that stretch reads HSVHH. 2 helical membrane passes run 162–182 and 209–229; these read ILFL…HLIT and NFLP…AYSA. The short motif at 231–237 is the Histidine box-3 element; the sequence is FHDYHHR.

It belongs to the sterol desaturase family. Fe cation serves as cofactor. In terms of tissue distribution, strongly expressed in leaves, flowers, siliques and developing seeds.

The protein resides in the endoplasmic reticulum membrane. It catalyses the reaction 4,4-dimethyl-5alpha-cholest-7-en-3beta-ol + 6 Fe(II)-[cytochrome b5] + 3 O2 + 5 H(+) = 4alpha-carboxy-4beta-methyl-5alpha-cholest-7-ene-3beta-ol + 6 Fe(III)-[cytochrome b5] + 4 H2O. It carries out the reaction 24-methylidenelophenol + 6 Fe(II)-[cytochrome b5] + 3 O2 + 5 H(+) = 4alpha-carboxy-ergosta-7,24(24(1))-dien-3beta-ol + 6 Fe(III)-[cytochrome b5] + 4 H2O. Its function is as follows. Non-heme iron oxygenase involved in sterols biosynthesis by catalyzing the removal of the second methyl group at the C-4 position. 24-ethylidenelophenol and 24-ethyllophenol are the preferred substrates. Together with SMO2-2, required during embryogenesis, probably by maintaining sterols and auxin homeostasis. The polypeptide is Methylsterol monooxygenase 2-1 (Arabidopsis thaliana (Mouse-ear cress)).